A 260-amino-acid chain; its full sequence is Outer membrane protein assembly factor BamD (260 aa).

An N-terminal signal peptide occupies residues 1 to 19 (MRKLKSFTFIALTAFAITA). A lipid anchor (N-palmitoyl cysteine) is attached at Cys20. The S-diacylglycerol cysteine moiety is linked to residue Cys20.

Belongs to the BamD family. In terms of assembly, part of the Bam complex.

The protein localises to the cell outer membrane. Part of the outer membrane protein assembly complex, which is involved in assembly and insertion of beta-barrel proteins into the outer membrane. This Pasteurella multocida (strain Pm70) protein is Outer membrane protein assembly factor BamD.